The primary structure comprises 417 residues: UDP-N-acetylglucosamine 1-carboxyvinyltransferase (417 aa).

Phosphoenolpyruvate is bound at residue 22-23; it reads KN. Arg93 is a binding site for UDP-N-acetyl-alpha-D-glucosamine. Cys117 functions as the Proton donor in the catalytic mechanism. Cys117 bears the 2-(S-cysteinyl)pyruvic acid O-phosphothioketal mark. UDP-N-acetyl-alpha-D-glucosamine is bound by residues 122–126, Asp305, and Ile327; that span reads RPVDL.

It belongs to the EPSP synthase family. MurA subfamily.

It localises to the cytoplasm. It catalyses the reaction phosphoenolpyruvate + UDP-N-acetyl-alpha-D-glucosamine = UDP-N-acetyl-3-O-(1-carboxyvinyl)-alpha-D-glucosamine + phosphate. It functions in the pathway cell wall biogenesis; peptidoglycan biosynthesis. Cell wall formation. Adds enolpyruvyl to UDP-N-acetylglucosamine. This chain is UDP-N-acetylglucosamine 1-carboxyvinyltransferase, found in Thiobacillus denitrificans (strain ATCC 25259 / T1).